Here is a 458-residue protein sequence, read N- to C-terminus: Argininosuccinate lyase (458 aa).

Belongs to the lyase 1 family. Argininosuccinate lyase subfamily.

Its subcellular location is the cytoplasm. It catalyses the reaction 2-(N(omega)-L-arginino)succinate = fumarate + L-arginine. It participates in amino-acid biosynthesis; L-arginine biosynthesis; L-arginine from L-ornithine and carbamoyl phosphate: step 3/3. This Neisseria gonorrhoeae (strain ATCC 700825 / FA 1090) protein is Argininosuccinate lyase.